Reading from the N-terminus, the 228-residue chain is Small ribosomal subunit protein uS3 (228 aa).

A KH type-2 domain is found at 39–107 (VREYLQDKLK…PVHINIEEIR (69 aa)).

The protein belongs to the universal ribosomal protein uS3 family. In terms of assembly, part of the 30S ribosomal subunit. Forms a tight complex with proteins S10 and S14.

Binds the lower part of the 30S subunit head. Binds mRNA in the 70S ribosome, positioning it for translation. The sequence is that of Small ribosomal subunit protein uS3 from Pseudomonas fluorescens (strain ATCC BAA-477 / NRRL B-23932 / Pf-5).